Here is a 746-residue protein sequence, read N- to C-terminus: NAD(P)H-quinone oxidoreductase subunit 5, chloroplastic (746 aa).

A run of 16 helical transmembrane segments spans residues 9–29 (WIIP…LLLF), 40–60 (WTFL…YLSI), 89–109 (IDPL…LVLI), 125–145 (FAYM…SNLI), 147–167 (VYFF…FWFT), 185–205 (GDFG…SFEF), 221–241 (VNLL…IAKS), 258–278 (TPIS…FLVA), 280–300 (LLPL…IGII), 327–347 (LGYM…FHLI), 354–374 (ALLF…VGYS), 396–416 (TAFL…CFWS), 425–445 (LLFS…TAFY), 547–567 (ILFP…IGIP), 608–628 (FSVS…KPFY), and 723–743 (YLFL…FFYF).

Belongs to the complex I subunit 5 family. NDH is composed of at least 16 different subunits, 5 of which are encoded in the nucleus.

The protein localises to the plastid. It localises to the chloroplast thylakoid membrane. The catalysed reaction is a plastoquinone + NADH + (n+1) H(+)(in) = a plastoquinol + NAD(+) + n H(+)(out). It carries out the reaction a plastoquinone + NADPH + (n+1) H(+)(in) = a plastoquinol + NADP(+) + n H(+)(out). In terms of biological role, NDH shuttles electrons from NAD(P)H:plastoquinone, via FMN and iron-sulfur (Fe-S) centers, to quinones in the photosynthetic chain and possibly in a chloroplast respiratory chain. The immediate electron acceptor for the enzyme in this species is believed to be plastoquinone. Couples the redox reaction to proton translocation, and thus conserves the redox energy in a proton gradient. This chain is NAD(P)H-quinone oxidoreductase subunit 5, chloroplastic (ndhF), found in Lepidium virginicum (Virginia pepperweed).